Reading from the N-terminus, the 525-residue chain is Histidine-rich glycoprotein (525 aa).

The signal sequence occupies residues 1-18 (MKALIAALLLITLQYSCA). 2 consecutive Cystatin domains span residues 19-136 (VSPT…SALA) and 137-254 (NTKD…NING). Disulfide bonds link Cys24–Cys504, Cys78–Cys89, Cys105–Cys126, Cys203–Cys417, and Cys218–Cys241. Residues 41–84 (RRRDGYLFQLLRIADAHLDRVENTTVYYLVLDVQESDCSVLSRK) form an interaction with ATP5F1A region. A glycan (N-linked (GlcNAc...) asparagine) is linked at Asn63. A glycan (N-linked (GlcNAc...) asparagine) is linked at Asn125. A disordered region spans residues 252–407 (INGVPPHLGH…GHHPHGHHPH (156 aa)). Residues 284-293 (RDHHHPHKPH) show a composition bias toward basic residues. Positions 310–320 (PPLPQGPPPLL) are enriched in pro residues. Residues 323–348 (SCSSCQHATFGTNGAQRHSHNNNSSD) show a composition bias toward polar residues. N-linked (GlcNAc...) asparagine glycosylation is found at Asn344 and Asn345. The tract at residues 348–382 (DLHPHKHHSHEQHPHGHHPHAHHPHEHDTHRQHPH) is necessary for endothelial cell focal adhesions and anti-angiogenic activities. Basic residues-rich tracts occupy residues 351-371 (PHKH…AHHP) and 379-407 (QHPH…HHPH).

In terms of assembly, interacts (via the HRR domain) with TPM1; the interaction appears to contribute to the antiangiogenic properties of the HRR domain. Interacts with THBS2; the interaction blocks the antiangiogenic effect of THBS2 with CD36. Interacts with THBS1 (via the TSP type I repeats); the interaction blocks the antiangiogenic effect of THBS1 with CD3. Interacts with PLG (via its Kringle domains); the interaction tethers PLG to the cell surface and enhances its activation. Interacts with HPSE; the interaction is enhanced at acidic pH, partially inhibits binding of HPSE to cell surface receptors and modulates its enzymatic activity. Interacts (via the HRR domain) with TMP1; the interaction partially mediates the antiangiogenic properties of HRG. Interacts with kappa and lambda light chains of IgG molecules. Interacts with ATP5F1A; the interaction occurs on the surface of T-cells and alters their cell morphology in concert with CONA. Binds IgG molecules containing kappa and lambda light chains and inhibits the formation of insoluble immunoglobulin complexes. Interacts with F12; the interaction, which is enhanced in the presence of zinc ions and inhibited by heparin-binding to HRG, inhibits factor XII autoactivation and contact-initiated coagulation. The cofactor is Zn(2+). Proteolytic cleavage produces several HRG fragments which are mostly disulfide-linked and, therefore, not released. Cleavage by plasmin is inhibited in the presence of heparin, zinc ions or in an acidic environment. Cleavage reduces binding of HRG to heparan sulfate, but enhances the ability of HRG to bind and tether plasminogen to the cell surface. On platelet activation, releases a 33 kDa antiangiogenic peptide which encompasses the HRR. Also cleaved in the C-terminal by plasmin. In terms of processing, N-glycosylated. As to expression, expressed in macrophages and in malignant cells. Expressed by the liver and secreted in plasma (at protein level).

The protein localises to the secreted. Functionally, plasma glycoprotein that binds a number of ligands such as heme, heparin, heparan sulfate, thrombospondin, plasminogen, and divalent metal ions. Binds heparin and heparin/glycosaminoglycans in a zinc-dependent manner. Binds heparan sulfate on the surface of liver, lung, kidney and heart endothelial cells. Binds to N-sulfated polysaccharide chains on the surface of liver endothelial cells. Inhibits rosette formation. Acts as an adapter protein and is implicated in regulating many processes such as immune complex and pathogen clearance, cell chemotaxis, cell adhesion, angiogenesis, coagulation and fibrinolysis. Mediates clearance of necrotic cells through enhancing the phagocytosis of necrotic cells in a heparan sulfate-dependent pathway. This process can be regulated by the presence of certain HRG ligands such as heparin and zinc ions. Binds to IgG subclasses of immunoglobins containing kappa and lambda light chains with different affinities regulating their clearance and inhibiting the formation of insoluble immune complexes. Tethers plasminogen to the cell surface. Binds T-cells and alters the cell morphology. Modulates angiogenesis by blocking the CD6-mediated antiangiongenic effect of thrombospondins, THBS1 and THBS2. Acts as a regulator of the vascular endothelial growth factor (VEGF) signaling pathway; inhibits endothelial cell motility by reducing VEGF-induced complex formation between PXN/paxillin and ILK/integrin-linked protein kinase and by promoting inhibition of VEGF-induced tyrosine phosphorylation of focal adhesion kinases and alpha-actinins in endothelial cells. Also plays a role in the regulation of tumor angiogenesis and tumor immune surveillance. Normalizes tumor vessels and promotes antitumor immunity by polarizing tumor-associated macrophages, leading to decreased tumor growth and metastasis. In Homo sapiens (Human), this protein is Histidine-rich glycoprotein (HRG).